A 177-amino-acid polypeptide reads, in one-letter code: Inorganic pyrophosphatase (177 aa).

Positions 31, 45, and 57 each coordinate substrate. The Mg(2+) site is built by Asp67, Asp72, and Asp104. Tyr141 is a binding site for substrate.

The protein belongs to the PPase family. In terms of assembly, homohexamer. Mg(2+) is required as a cofactor.

The protein localises to the cytoplasm. It carries out the reaction diphosphate + H2O = 2 phosphate + H(+). In terms of biological role, catalyzes the hydrolysis of inorganic pyrophosphate (PPi) forming two phosphate ions. The sequence is that of Inorganic pyrophosphatase from Halobacterium salinarum (strain ATCC 700922 / JCM 11081 / NRC-1) (Halobacterium halobium).